Consider the following 166-residue polypeptide: UPF0304 protein VS_1049 (166 aa).

It belongs to the UPF0304 family.

The protein is UPF0304 protein VS_1049 of Vibrio atlanticus (strain LGP32) (Vibrio splendidus (strain Mel32)).